The following is a 146-amino-acid chain: ATP synthase epsilon chain 2 (146 aa).

It belongs to the ATPase epsilon chain family. In terms of assembly, F-type ATPases have 2 components, CF(1) - the catalytic core - and CF(0) - the membrane proton channel. CF(1) has five subunits: alpha(3), beta(3), gamma(1), delta(1), epsilon(1). CF(0) has three main subunits: a, b and c.

It is found in the cell inner membrane. Its function is as follows. Produces ATP from ADP in the presence of a proton gradient across the membrane. The protein is ATP synthase epsilon chain 2 of Cereibacter sphaeroides (strain ATCC 17023 / DSM 158 / JCM 6121 / CCUG 31486 / LMG 2827 / NBRC 12203 / NCIMB 8253 / ATH 2.4.1.) (Rhodobacter sphaeroides).